We begin with the raw amino-acid sequence, 572 residues long: FAD-linked oxidoreductase patO (572 aa).

An N-terminal signal peptide occupies residues 1 to 23; the sequence is MRLSIYSSILLLRAMCLVRPTFG. N-linked (GlcNAc...) asparagine glycans are attached at residues Asn48, Asn71, Asn126, Asn180, Asn309, Asn354, Asn381, Asn422, Asn446, and Asn481. Residues 115–295 form the FAD-binding PCMH-type domain; that stretch reads CAPGDMVVYS…YSMTVKAFPD (181 aa).

Belongs to the oxygen-dependent FAD-linked oxidoreductase family. FAD serves as cofactor.

The protein resides in the vacuole lumen. It participates in mycotoxin biosynthesis; patulin biosynthesis. Its function is as follows. FAD-linked oxidoreductase; part of the gene cluster that mediates the biosynthesis of patulin, an acetate-derived tetraketide mycotoxin produced by several fungal species that shows antimicrobial properties against several bacteria. PatO acts with patJ in the vacuole to convert gentisyl alcohol to isoepoxydon. The pathway begins with the synthesis of 6-methylsalicylic acid by the polyketide synthase (PKS) patK via condensation of acetate and malonate units. The 6-methylsalicylic acid decarboxylase patG then catalyzes the decarboxylation of 6-methylsalicylic acid to yield m-cresol (also known as 3-methylphenol). These first reactions occur in the cytosol. The intermediate m-cresol is then transported into the endoplasmic reticulum where the cytochrome P450 monooxygenase patH converts it to m-hydroxybenzyl alcohol, which is further converted to gentisyl alcohol by the cytochrome P450 monooxygenase patI. The oxidoreductases patJ and patO further convert gentisyl alcohol to isoepoxydon in the vacuole. PatN catalyzes then the transformation of isoepoxydon into phyllostine. The cluster protein patF is responsible for the conversion from phyllostine to neopatulin whereas the alcohol dehydrogenase patD converts neopatulin to E-ascladiol. The steps between isoepoxydon and E-ascladiol occur in the cytosol, and E-ascladiol is probably secreted to the extracellular space by one of the cluster-specific transporters patC or patM. Finally, the secreted patulin synthase patE catalyzes the conversion of E-ascladiol to patulin. The sequence is that of FAD-linked oxidoreductase patO from Aspergillus clavatus (strain ATCC 1007 / CBS 513.65 / DSM 816 / NCTC 3887 / NRRL 1 / QM 1276 / 107).